The chain runs to 197 residues: Chitin synthase 3 (197 aa).

This sequence belongs to the chitin synthase family. Class III subfamily.

The protein localises to the cell membrane. It catalyses the reaction [(1-&gt;4)-N-acetyl-beta-D-glucosaminyl](n) + UDP-N-acetyl-alpha-D-glucosamine = [(1-&gt;4)-N-acetyl-beta-D-glucosaminyl](n+1) + UDP + H(+). Functionally, polymerizes chitin, a structural polymer of the cell wall and septum, by transferring the sugar moiety of UDP-GlcNAc to the non-reducing end of the growing chitin polymer. This chain is Chitin synthase 3 (CHS3), found in Exophiala jeanselmei (Dematiaceous fungus).